The primary structure comprises 154 residues: Myoglobin (154 aa).

One can recognise a Globin domain in the interval glycine 2 to lysine 148. Serine 4 is subject to Phosphoserine. Position 65 (histidine 65) interacts with nitrite. Histidine 65 lines the O2 pocket. Threonine 68 carries the post-translational modification Phosphothreonine. Histidine 94 provides a ligand contact to heme b.

It belongs to the globin family. Monomeric.

Its subcellular location is the cytoplasm. It localises to the sarcoplasm. It carries out the reaction Fe(III)-heme b-[protein] + nitric oxide + H2O = Fe(II)-heme b-[protein] + nitrite + 2 H(+). The catalysed reaction is H2O2 + AH2 = A + 2 H2O. Functionally, monomeric heme protein which primary function is to store oxygen and facilitate its diffusion within muscle tissues. Reversibly binds oxygen through a pentacoordinated heme iron and enables its timely and efficient release as needed during periods of heightened demand. Depending on the oxidative conditions of tissues and cells, and in addition to its ability to bind oxygen, it also has a nitrite reductase activity whereby it regulates the production of bioactive nitric oxide. Under stress conditions, like hypoxia and anoxia, it also protects cells against reactive oxygen species thanks to its pseudoperoxidase activity. In Canis lupus familiaris (Dog), this protein is Myoglobin (MB).